The sequence spans 504 residues: Probable phenylalanine--tRNA ligase beta subunit (504 aa).

The 77-residue stretch at 270–346 folds into the B5 domain; sequence IKDKSYLLSI…ICYGFNNINM (77 aa). The Mg(2+) site is built by Asp-324, Asp-330, Glu-333, and Asp-334.

The protein belongs to the phenylalanyl-tRNA synthetase beta subunit family. Type 2 subfamily. Tetramer of two alpha and two beta subunits. Mg(2+) is required as a cofactor.

The protein localises to the cytoplasm. It carries out the reaction tRNA(Phe) + L-phenylalanine + ATP = L-phenylalanyl-tRNA(Phe) + AMP + diphosphate + H(+). The sequence is that of Probable phenylalanine--tRNA ligase beta subunit from Vairimorpha ceranae (strain BRL01) (Microsporidian parasite).